Consider the following 788-residue polypeptide: Auxin response factor 4 (788 aa).

Positions 1–19 (MEFDLNTEIAEVEEEENDD) are enriched in acidic residues. The segment at 1–53 (MEFDLNTEIAEVEEEENDDVGVGVGGGTRIDKGRLGISPSSSSSCSSGSSSSS) is disordered. Over residues 38 to 53 (SPSSSSSCSSGSSSSS) the composition is skewed to low complexity. Residues 177 to 279 (FCKTLTASDT…ELRLGIRRAA (103 aa)) constitute a DNA-binding region (TF-B3). The segment at 413-433 (LSIQSSPRPKRPWAGLLDTTP) is disordered. The region spanning 665-747 (RICTKVHKQG…VVWKIHLYTK (83 aa)) is the PB1 domain.

It belongs to the ARF family. As to quaternary structure, homodimers and heterodimers. In terms of tissue distribution, expressed in the whole plant.

The protein localises to the nucleus. Auxin response factors (ARFs) are transcriptional factors that bind specifically to the DNA sequence 5'-TGTCTC-3' found in the auxin-responsive promoter elements (AuxREs). Could act as transcriptional activator or repressor. Formation of heterodimers with Aux/IAA proteins may alter their ability to modulate early auxin response genes expression. In Arabidopsis thaliana (Mouse-ear cress), this protein is Auxin response factor 4 (ARF4).